The primary structure comprises 329 residues: MSFAAGLLNATVQAATVLLLAGLGELISERAGVLNLGVEGMMLVGALGGFVVTAVTGNYWLGFGVGIACGMALAAVHAFLCISLKSNQVISGVMLTLLGTGLTTFFGSGWVQESITGFPQMTFPIVGRYLVHLPLVGEAFFRSTATDYLALLAVPVVWFFLYRSNLGLEIIAVGEDPEMADTMGVPVFKFRYLAVIIGGGFAGAAGAHLSLAFSQLWVPGMTVGRGWIAVALVVFAQWRPSRMLVGAYLFGLLDALQLRSQSLSLALDPNAPLAGVLNPLVNTLMNPQIMSTYPYLTTIAVLSYAVIRTESVRLAVPSALLQSYNREMD.

A run of 7 helical transmembrane segments spans residues 3 to 23 (FAAG…LAGL), 32 to 52 (GVLN…GFVV), 60 to 80 (WLGF…HAFL), 89 to 109 (VISG…FGSG), 139 to 161 (AFFR…WFFL), 193 to 213 (LAVI…SLAF), and 216 to 236 (LWVP…VVFA).

Belongs to the binding-protein-dependent transport system permease family. As to quaternary structure, the complex is composed of two ATP-binding proteins (TsgD13), two transmembrane proteins (TsgB13 and TsgC13) and a solute-binding protein (TsgA13).

The protein localises to the cell membrane. Functionally, part of an ABC transporter complex involved in glucose import (Potential). Responsible for the translocation of the substrate across the membrane. This is Putative glucose ABC transporter permease protein TsgC13 (tsgC13) from Haloferax volcanii (strain ATCC 29605 / DSM 3757 / JCM 8879 / NBRC 14742 / NCIMB 2012 / VKM B-1768 / DS2) (Halobacterium volcanii).